Reading from the N-terminus, the 126-residue chain is Nascent polypeptide-associated complex protein (126 aa).

The 68-residue stretch at Pro-10–Lys-77 folds into the NAC-A/B domain.

Belongs to the NAC-alpha family. As to quaternary structure, homodimer. Interacts with the ribosome. Binds ribosomal RNA.

In terms of biological role, contacts the emerging nascent chain on the ribosome. This chain is Nascent polypeptide-associated complex protein, found in Methanococcus maripaludis (strain DSM 14266 / JCM 13030 / NBRC 101832 / S2 / LL).